A 217-amino-acid polypeptide reads, in one-letter code: GRB2-related adapter protein (217 aa).

One can recognise an SH3 1 domain in the interval 1–58 (MESVALYSFQATESDELAFNKGDTLKILNMEDDQNWYKAELRGAEGFVPKNYIRLKPH). Residues 60–152 (WYSGRISRQL…KRQVFLQDEE (93 aa)) form the SH2 domain. One can recognise an SH3 2 domain in the interval 158 to 217 (PRACFAQAQFDFSAQDPSQLSFRRGDIIEVLERLDPSWWRGRLSGRIGFFPRSYVQPVHM).

Belongs to the GRB2/sem-5/DRK family. Associates through its SH2 domain with ligand-activated receptors for stem cell factor (KIT) and erythropoietin (EPOR). Also forms a stable complex with the Bcr-Abl oncoprotein. GRAP is associated with the Ras guanine nucleotide exchange factor SOS1, primarily through its N-terminal SH3 domain. Interacts with phosphorylated LAT upon TCR activation. Interacts with SHB.

It localises to the membrane. It is found in the synapse. In terms of biological role, couples signals from receptor and cytoplasmic tyrosine kinases to the Ras signaling pathway. Plays a role in the inner ear and in hearing. In Bos taurus (Bovine), this protein is GRB2-related adapter protein (GRAP).